Here is a 352-residue protein sequence, read N- to C-terminus: Phosphoribosylformylglycinamidine cyclo-ligase (352 aa).

The protein belongs to the AIR synthase family.

The protein localises to the cytoplasm. It catalyses the reaction 2-formamido-N(1)-(5-O-phospho-beta-D-ribosyl)acetamidine + ATP = 5-amino-1-(5-phospho-beta-D-ribosyl)imidazole + ADP + phosphate + H(+). It participates in purine metabolism; IMP biosynthesis via de novo pathway; 5-amino-1-(5-phospho-D-ribosyl)imidazole from N(2)-formyl-N(1)-(5-phospho-D-ribosyl)glycinamide: step 2/2. The protein is Phosphoribosylformylglycinamidine cyclo-ligase of Stenotrophomonas maltophilia (strain R551-3).